A 292-amino-acid polypeptide reads, in one-letter code: 33 kDa chaperonin (292 aa).

2 cysteine pairs are disulfide-bonded: Cys230/Cys232 and Cys263/Cys266.

This sequence belongs to the HSP33 family. Post-translationally, under oxidizing conditions two disulfide bonds are formed involving the reactive cysteines. Under reducing conditions zinc is bound to the reactive cysteines and the protein is inactive.

The protein resides in the cytoplasm. Functionally, redox regulated molecular chaperone. Protects both thermally unfolding and oxidatively damaged proteins from irreversible aggregation. Plays an important role in the bacterial defense system toward oxidative stress. The protein is 33 kDa chaperonin of Salmonella paratyphi A (strain ATCC 9150 / SARB42).